Consider the following 213-residue polypeptide: 3-demethoxyubiquinol 3-hydroxylase (213 aa).

Positions 62, 92, 95, 144, 176, and 179 each coordinate Fe cation.

This sequence belongs to the COQ7 family. Requires Fe cation as cofactor.

Its subcellular location is the cell membrane. The catalysed reaction is a 5-methoxy-2-methyl-3-(all-trans-polyprenyl)benzene-1,4-diol + AH2 + O2 = a 3-demethylubiquinol + A + H2O. The protein operates within cofactor biosynthesis; ubiquinone biosynthesis. Functionally, catalyzes the hydroxylation of 2-nonaprenyl-3-methyl-6-methoxy-1,4-benzoquinol during ubiquinone biosynthesis. The chain is 3-demethoxyubiquinol 3-hydroxylase from Psychrobacter sp. (strain PRwf-1).